The primary structure comprises 359 residues: MITPLTLATLSKNPILVDFFDPEDGRWNSHVDLGLWSDLYLIAPATANTIGKMAAGIADNLLLTSYLSARCPVFIAPAMDVDMLMHPATQRNLGILKSSGNHIIEPGSGELASGLTGKGRMAEPEEIVREVISFFSKKKITEKPLNGRRVFINAGPTIEPIDPVRFISNYSSGRMGIALADAAAAMGAEVTLVLGPVTLRPSSQDINVIDVRSAAEMKEASVEAFRECDIAILAAAVADFTPLTTSDKKIKRGSGEMVINLRPTEDIAAELGKMKKKNQLLVGFALETDDEITNASSKLKRKNLDMIVLNSLKDPGAGFGHETNRITIIDKSNNIDKFELKTKGEVAADIIRKILTLVH.

It in the N-terminal section; belongs to the HFCD (homo-oligomeric flavin containing Cys decarboxylase) superfamily. This sequence in the C-terminal section; belongs to the PPC synthetase family.

The catalysed reaction is L-cysteine + H(+) = cysteamine + CO2. It carries out the reaction 3-sulfino-L-alanine + H(+) = hypotaurine + CO2. Its activity is regulated as follows. Slightly stimulated in the presence of 1 mM Mg(2+). Its function is as follows. Catalyzes the decarboxylation of L-cysteine to cysteamine and of 3-sulfino-L-alanine (cysteine sulfinic acid) to hypotaurine. Also catalyzes the decarboxylation of various amino acids such as L-lysine, L-glutamate, L-asparaginate and L-proline. In vitro, shows highest activity with L-cysteine as substrate. The chain is Cysteine/Cysteine sulfinic acid decarboxylase from Unknown prokaryotic organism.